Consider the following 66-residue polypeptide: Alpha-actitoxin-Ms11a-1 (66 aa).

The signal sequence occupies residues 1–24 (MASKIFFVLAVFLVMSAVLPESFA). Intrachain disulfides connect Cys-26-Cys-41, Cys-33-Cys-46, and Cys-40-Cys-61.

It is found in the secreted. The protein localises to the nematocyst. Its function is as follows. Alpha-toxins act on postsynaptic membranes, they bind to the nicotinic acetylcholine receptors (nAChR) and thus inhibit them. This toxin competes with alpha-bungarotoxin for binding to orthosteric sites on muscle-type T.carlifornicus (IC(50)=408 nM) and human alpha-7/CHRNA7 nAChRs (IC(50)=14.16 uM). This is Alpha-actitoxin-Ms11a-1 from Metridium senile (Brown sea anemone).